Here is a 233-residue protein sequence, read N- to C-terminus: Hydroxyacylglutathione hydrolase (233 aa).

Residues H52, H54, D56, H57, H108, D125, and H163 each contribute to the Zn(2+) site.

It belongs to the metallo-beta-lactamase superfamily. Glyoxalase II family. As to quaternary structure, monomer. Zn(2+) serves as cofactor.

It carries out the reaction an S-(2-hydroxyacyl)glutathione + H2O = a 2-hydroxy carboxylate + glutathione + H(+). It participates in secondary metabolite metabolism; methylglyoxal degradation; (R)-lactate from methylglyoxal: step 2/2. Functionally, thiolesterase that catalyzes the hydrolysis of S-D-lactoyl-glutathione to form glutathione and D-lactic acid. The sequence is that of Hydroxyacylglutathione hydrolase from Histophilus somni (strain 129Pt) (Haemophilus somnus).